Here is a 130-residue protein sequence, read N- to C-terminus: Methylglyoxal synthase (130 aa).

Positions 1–130 (MSKPRIALIA…DLARTMQDVC (130 aa)) constitute an MGS-like domain. Substrate-binding positions include H11, K15, 37 to 40 (TGTT), and 57 to 58 (SG). D63 functions as the Proton donor/acceptor in the catalytic mechanism. H90 is a substrate binding site.

The protein belongs to the methylglyoxal synthase family.

It carries out the reaction dihydroxyacetone phosphate = methylglyoxal + phosphate. Its function is as follows. Catalyzes the formation of methylglyoxal from dihydroxyacetone phosphate. This Burkholderia multivorans (strain ATCC 17616 / 249) protein is Methylglyoxal synthase.